A 217-amino-acid chain; its full sequence is ATP-dependent Clp protease proteolytic subunit (217 aa).

The active-site Nucleophile is Ser121. Residue His146 is part of the active site.

Belongs to the peptidase S14 family. As to quaternary structure, fourteen ClpP subunits assemble into 2 heptameric rings which stack back to back to give a disk-like structure with a central cavity, resembling the structure of eukaryotic proteasomes.

Its subcellular location is the cytoplasm. It catalyses the reaction Hydrolysis of proteins to small peptides in the presence of ATP and magnesium. alpha-casein is the usual test substrate. In the absence of ATP, only oligopeptides shorter than five residues are hydrolyzed (such as succinyl-Leu-Tyr-|-NHMec, and Leu-Tyr-Leu-|-Tyr-Trp, in which cleavage of the -Tyr-|-Leu- and -Tyr-|-Trp bonds also occurs).. Cleaves peptides in various proteins in a process that requires ATP hydrolysis. Has a chymotrypsin-like activity. Plays a major role in the degradation of misfolded proteins. The chain is ATP-dependent Clp protease proteolytic subunit from Burkholderia vietnamiensis (strain G4 / LMG 22486) (Burkholderia cepacia (strain R1808)).